A 444-amino-acid polypeptide reads, in one-letter code: Phosphatidate cytidylyltransferase 2 (444 aa).

Residues 1-38 (MTELRQRVVREDAPPEDKESESEAKLDGETASDSESRA) are compositionally biased toward basic and acidic residues. Residues 1–48 (MTELRQRVVREDAPPEDKESESEAKLDGETASDSESRAETAPLPTSVD) form a disordered region. Residue serine 20 is modified to Phosphoserine. Position 30 is a phosphothreonine (threonine 30). 3 positions are modified to phosphoserine: serine 32, serine 34, and serine 36. Phosphothreonine is present on threonine 50. The next 6 helical transmembrane spans lie at 78–98 (MIAFFFIIIYLGPMVLMMIVM), 129–149 (WYFLLCVNYFFYGETVTDYFF), 165–185 (HRFISFALYLTGFCMFVLSLV), 212–232 (LVIHNLFEGMIWFIVPISCVI), 261–281 (GFIGGFFATVVFGLLLSYVMS), and 339–359 (IALSTFASLIGPFGGFFASGF).

It belongs to the CDS family. In terms of assembly, homodimer. As to expression, ubiquitous. Expressed in the ganglion cell layer and inner nuclear layer of the retina.

It localises to the endoplasmic reticulum membrane. It carries out the reaction a 1,2-diacyl-sn-glycero-3-phosphate + CTP + H(+) = a CDP-1,2-diacyl-sn-glycerol + diphosphate. The enzyme catalyses 1-octadecanoyl-2-(5Z,8Z,11Z,14Z-eicosatetraenoyl)-sn-glycero-3-phosphate + CTP + H(+) = 1-octadecanoyl-2-(5Z,8Z,11Z,14Z-eicosatetraenoyl)-sn-glycero-3-cytidine-5'-diphosphate + diphosphate. It catalyses the reaction 1-octadecanoyl-2-(9Z,12Z-octadecadienoyl)-sn-glycero-3-phosphate + CTP + H(+) = 1-octadecanoyl-2-(9Z,12Z-octadecadienoyl)-sn-glycero-3-cytidine-5'-diphosphate + diphosphate. The catalysed reaction is 1-hexadecanoyl-2-(5Z,8Z,11Z,14Z-eicosatetraenoyl)-sn-glycero-3-phosphate + CTP + H(+) = 1-hexadecanoyl-2-(5Z,8Z,11Z,14Z-eicosatetraenoyl)-sn-glycero-3-cytidine-5'-diphosphate + diphosphate. It carries out the reaction 1,2-di-(5Z,8Z,11Z,14Z)-eicosatetraenoyl-sn-glycero-3-phosphate + CTP + H(+) = 1,2-di-(5Z,8Z,11Z,14Z-eicosatetraenoyl)-sn-glycero-3-cytidine-5'-diphosphate + diphosphate. The enzyme catalyses 1-octadecanoyl-2-(9Z-octadecenoyl)-sn-glycero-3-phosphate + CTP + H(+) = 1-octadecanoyl-2-(9Z-octadecenoyl)-sn-glycero-3-cytidine-5'-diphosphate + diphosphate. It catalyses the reaction 1-octadecanoyl-2-(4Z,7Z,10Z,13Z,16Z,19Z-docosahexaenoyl)-sn-glycero-3-phosphate + CTP + H(+) = 1-octadecanoyl-2-(4Z,7Z,10Z,13Z,16Z,19Z-docosahexaenoyl)-sn-glycero-3-cytidine-5'-diphosphate + diphosphate. The catalysed reaction is 1,2-di-(9Z,12Z-octadecadienoyl)-sn-glycero-3-phosphate + CTP + H(+) = 1,2-di-(9Z,12Z-octadecadienoyl)-sn-glycero-3-cytidine-5'-diphosphate + diphosphate. It carries out the reaction 1,2-di-(9Z-octadecenoyl)-sn-glycero-3-phosphate + CTP + H(+) = 1,2-di-(9Z-octadecenoyl)-sn-glycero-3-cytidine-5'-diphosphate + diphosphate. It functions in the pathway phospholipid metabolism; CDP-diacylglycerol biosynthesis; CDP-diacylglycerol from sn-glycerol 3-phosphate: step 3/3. Catalyzes the conversion of phosphatidic acid (PA) to CDP-diacylglycerol (CDP-DAG), an essential intermediate in the synthesis of phosphatidylglycerol, cardiolipin and phosphatidylinositol. Exhibits specificity for the nature of the acyl chains at the sn-1 and sn-2 positions in the substrate, PA and the preferred acyl chain composition is 1-stearoyl-2-arachidonoyl-sn-phosphatidic acid. Plays an important role in regulating the growth and maturation of lipid droplets which are storage organelles at the center of lipid and energy homeostasis. The polypeptide is Phosphatidate cytidylyltransferase 2 (Mus musculus (Mouse)).